A 510-amino-acid polypeptide reads, in one-letter code: Glutamyl-tRNA(Gln) amidotransferase subunit A (510 aa).

Catalysis depends on charge relay system residues K75 and S150. The active-site Acyl-ester intermediate is S174. The tract at residues D471–S510 is disordered. The segment covering A497–S510 has biased composition (basic residues).

This sequence belongs to the amidase family. GatA subfamily. As to quaternary structure, heterotrimer of A, B and C subunits.

The catalysed reaction is L-glutamyl-tRNA(Gln) + L-glutamine + ATP + H2O = L-glutaminyl-tRNA(Gln) + L-glutamate + ADP + phosphate + H(+). Allows the formation of correctly charged Gln-tRNA(Gln) through the transamidation of misacylated Glu-tRNA(Gln) in organisms which lack glutaminyl-tRNA synthetase. The reaction takes place in the presence of glutamine and ATP through an activated gamma-phospho-Glu-tRNA(Gln). The chain is Glutamyl-tRNA(Gln) amidotransferase subunit A from Synechococcus sp. (strain JA-2-3B'a(2-13)) (Cyanobacteria bacterium Yellowstone B-Prime).